A 208-amino-acid chain; its full sequence is UPF0637 protein BCAH820_3975 (208 aa).

It belongs to the UPF0637 family.

The protein is UPF0637 protein BCAH820_3975 of Bacillus cereus (strain AH820).